The chain runs to 448 residues: Glucose-6-phosphate isomerase (448 aa).

Glu291 functions as the Proton donor in the catalytic mechanism. Catalysis depends on residues His312 and Lys425.

Belongs to the GPI family.

It localises to the cytoplasm. The enzyme catalyses alpha-D-glucose 6-phosphate = beta-D-fructose 6-phosphate. Its pathway is carbohydrate biosynthesis; gluconeogenesis. It participates in carbohydrate degradation; glycolysis; D-glyceraldehyde 3-phosphate and glycerone phosphate from D-glucose: step 2/4. In terms of biological role, catalyzes the reversible isomerization of glucose-6-phosphate to fructose-6-phosphate. The protein is Glucose-6-phosphate isomerase of Symbiobacterium thermophilum (strain DSM 24528 / JCM 14929 / IAM 14863 / T).